The sequence spans 158 residues: NAD(P)H-quinone oxidoreductase subunit N (158 aa).

It belongs to the complex I NdhN subunit family. In terms of assembly, NDH-1 can be composed of about 15 different subunits; different subcomplexes with different compositions have been identified which probably have different functions.

It localises to the cellular thylakoid membrane. It catalyses the reaction a plastoquinone + NADH + (n+1) H(+)(in) = a plastoquinol + NAD(+) + n H(+)(out). The enzyme catalyses a plastoquinone + NADPH + (n+1) H(+)(in) = a plastoquinol + NADP(+) + n H(+)(out). Its function is as follows. NDH-1 shuttles electrons from an unknown electron donor, via FMN and iron-sulfur (Fe-S) centers, to quinones in the respiratory and/or the photosynthetic chain. The immediate electron acceptor for the enzyme in this species is believed to be plastoquinone. Couples the redox reaction to proton translocation, and thus conserves the redox energy in a proton gradient. Cyanobacterial NDH-1 also plays a role in inorganic carbon-concentration. The protein is NAD(P)H-quinone oxidoreductase subunit N of Gloeothece citriformis (strain PCC 7424) (Cyanothece sp. (strain PCC 7424)).